Consider the following 420-residue polypeptide: Glutamate-1-semialdehyde 2,1-aminomutase (420 aa).

At lysine 259 the chain carries N6-(pyridoxal phosphate)lysine.

Belongs to the class-III pyridoxal-phosphate-dependent aminotransferase family. HemL subfamily. The cofactor is pyridoxal 5'-phosphate.

It is found in the cytoplasm. The enzyme catalyses (S)-4-amino-5-oxopentanoate = 5-aminolevulinate. It functions in the pathway porphyrin-containing compound metabolism; protoporphyrin-IX biosynthesis; 5-aminolevulinate from L-glutamyl-tRNA(Glu): step 2/2. The chain is Glutamate-1-semialdehyde 2,1-aminomutase from Sulfolobus acidocaldarius (strain ATCC 33909 / DSM 639 / JCM 8929 / NBRC 15157 / NCIMB 11770).